Here is a 914-residue protein sequence, read N- to C-terminus: DNA mismatch repair protein MutS (914 aa).

Positions 28-74 (NTNSVKDSNLNDEELSKNAELRPRKRKKSVLLQNSVGEQTEDFSNDE) are disordered. 726-733 (GPNASGKS) contributes to the ATP binding site.

Belongs to the DNA mismatch repair MutS family.

Its function is as follows. This protein is involved in the repair of mismatches in DNA. It is possible that it carries out the mismatch recognition step. This protein has a weak ATPase activity. The polypeptide is DNA mismatch repair protein MutS (Prochlorococcus marinus (strain SARG / CCMP1375 / SS120)).